The sequence spans 657 residues: UvrABC system protein B (657 aa).

The region spanning 25-163 (ASIKNGNKYQ…QGMVLFLEIN (139 aa)) is the Helicase ATP-binding domain. An ATP-binding site is contributed by 38–45 (GVTGSGKT). The Beta-hairpin motif lies at 91–114 (YYDYYQPEAYIPRQDLFIEKDSSI). The DEAD box signature appears at 130–133 (LSFD). The Helicase C-terminal domain occupies 433-599 (QVEILYDMAK…SVSRNVEESL (167 aa)). Positions 622-657 (AKIVKDLRKQMMEAADKLEFEKAAALRDEIKKMRKL) constitute a UVR domain.

It belongs to the UvrB family. Forms a heterotetramer with UvrA during the search for lesions. Interacts with UvrC in an incision complex.

Its subcellular location is the cytoplasm. In terms of biological role, the UvrABC repair system catalyzes the recognition and processing of DNA lesions. A damage recognition complex composed of 2 UvrA and 2 UvrB subunits scans DNA for abnormalities. Upon binding of the UvrA(2)B(2) complex to a putative damaged site, the DNA wraps around one UvrB monomer. DNA wrap is dependent on ATP binding by UvrB and probably causes local melting of the DNA helix, facilitating insertion of UvrB beta-hairpin between the DNA strands. Then UvrB probes one DNA strand for the presence of a lesion. If a lesion is found the UvrA subunits dissociate and the UvrB-DNA preincision complex is formed. This complex is subsequently bound by UvrC and the second UvrB is released. If no lesion is found, the DNA wraps around the other UvrB subunit that will check the other stand for damage. The polypeptide is UvrABC system protein B (Campylobacter hominis (strain ATCC BAA-381 / DSM 21671 / CCUG 45161 / LMG 19568 / NCTC 13146 / CH001A)).